A 389-amino-acid polypeptide reads, in one-letter code: Phospho-N-acetylmuramoyl-pentapeptide-transferase (389 aa).

10 helical membrane-spanning segments follow: residues 21-41 (FITFRAVFATLTALAIGLFFG), 70-90 (GTPTMGGALILLAIGVATLLW), 97-117 (FVWVVLIVTLGFGAVGWVDDY), 134-154 (YMWQSIIGLFAAVYLAFSVSA), 189-209 (TISYPLGVWGFIALTYFVIVG), 222-242 (GLAIMPTVMVGTALGLFAYLT), 259-279 (AGELIIFCGAMAGAGLAFLWF), 286-306 (VFMGDVGALALGGALGTIAVI), 311-331 (IVLFIMGGVFVVETLSVMIQV), and 366-386 (QVVVRFWIITMMLVLFGLSTL).

The protein belongs to the glycosyltransferase 4 family. MraY subfamily. Mg(2+) serves as cofactor.

The protein localises to the cell inner membrane. It carries out the reaction UDP-N-acetyl-alpha-D-muramoyl-L-alanyl-gamma-D-glutamyl-meso-2,6-diaminopimeloyl-D-alanyl-D-alanine + di-trans,octa-cis-undecaprenyl phosphate = di-trans,octa-cis-undecaprenyl diphospho-N-acetyl-alpha-D-muramoyl-L-alanyl-D-glutamyl-meso-2,6-diaminopimeloyl-D-alanyl-D-alanine + UMP. The protein operates within cell wall biogenesis; peptidoglycan biosynthesis. In terms of biological role, catalyzes the initial step of the lipid cycle reactions in the biosynthesis of the cell wall peptidoglycan: transfers peptidoglycan precursor phospho-MurNAc-pentapeptide from UDP-MurNAc-pentapeptide onto the lipid carrier undecaprenyl phosphate, yielding undecaprenyl-pyrophosphoryl-MurNAc-pentapeptide, known as lipid I. This is Phospho-N-acetylmuramoyl-pentapeptide-transferase from Herminiimonas arsenicoxydans.